We begin with the raw amino-acid sequence, 108 residues long: Putative septation protein SpoVG (108 aa).

The protein belongs to the SpoVG family.

Could be involved in septation. The protein is Putative septation protein SpoVG of Bdellovibrio bacteriovorus (strain ATCC 15356 / DSM 50701 / NCIMB 9529 / HD100).